Consider the following 398-residue polypeptide: O-methyltransferase penC (398 aa).

Asp-263 contacts S-adenosyl-L-methionine. His-305 serves as the catalytic Proton acceptor.

Belongs to the class I-like SAM-binding methyltransferase superfamily. Cation-independent O-methyltransferase family.

It participates in secondary metabolite biosynthesis. The protein operates within alkaloid biosynthesis. Its pathway is mycotoxin biosynthesis. Its function is as follows. O-methyltransferase; part of the gene cluster that mediates the biosynthesis of penigequinolones, potent insecticidal alkaloids that contain a highly modified 10-carbon prenyl group. The first stage is catalyzed by the nonribosomal peptide synthetase penN that condenses anthranilic acid and O-methyl-L-tyrosine to produce 4'-methoxycyclopeptin. 4'-methoxycyclopeptin is then converted to 4'-methoxydehydrocyclopeptin by the ketoglutarate-dependent dioxygenase penM through dehydrogenation to form a double bond between C-alpha and C-beta of the O-methyltyrosine side chain. PenM also converts its first product methoxydehydrocyclopeptin to 4'-methoxycyclopenin. The following conversion of 4'methoxycyclopenin into 4'-methoxyviridicatin is catalyzed by the cyclopenase penL. 4'-methoxyviridicatin is the precursor of quinolone natural products, and is further converted to quinolinone B. The prenyltransferase penI then catalyzes the canonical Friedel-Crafts alkylation of quinolinone B with dimethylallyl cation to yield dimethylallyl quinolone, which is subjected to FAD-dependent dehydrogenation by the FAD-linked oxidoreductase penH to yield conjugated aryl diene. The delta(3') double bond then serves as the site of the second alkylation with DMAPP catalyzed by the prenyltransferase penG to yield a carbenium ion intermediate, which can be attacked by H(2)O to yield a styrenyl quinolone containing a C3'-hydroxyprenyl chain, or undergo cyclization to yield yaequinolones J1 and J2. The conversion of the styrenyl quinolone into the tetrahydrofuran-containing yaequinolone C is performed by the FAD-dependent monooxygenase penE and involves epoxidation of the terminal C7'-C8' olefin, followed by epoxide ring opening initiated by the C3' hydroxyl group. The predicted cysteine hydrolase penJ acts as an epoxide hydrolase that enhances the rate of the 5-exo-tet cyclization step, increasing the yield of yaequinolone C. PenF catalyzes the cationic rearrangement of the epoxide formed by penE (before ring opening to produce yaequinolone C) into yaequinolone D. Finally, the short-chain dehydrogenase/reductase (SDR)-like reductase penD, catalyzes both the dehydration of yaequinolone D and the reduction of the resulting oxonium to yield penigequinolone. The chain is O-methyltransferase penC from Penicillium thymicola.